The chain runs to 215 residues: Adenylate kinase (215 aa).

An ATP-binding site is contributed by 10–15; that stretch reads GAGKGT. Residues 30 to 59 are NMP; it reads STGDMFRAAMKNNTELGKKAKSFMDNGDLV. Residues T31, R36, 57 to 59, 85 to 88, and Q92 each bind AMP; these read DLV and GFPR. An LID region spans residues 126–163; that stretch reads GRWICRTCGKTYHEIYNPPKVPGKCDLDGGELYQRDDD. R127 serves as a coordination point for ATP. Residues C130 and C133 each coordinate Zn(2+). Position 136 to 137 (136 to 137) interacts with ATP; sequence TY. Zn(2+) contacts are provided by C150 and D153. Residues R160 and R171 each coordinate AMP. ATP is bound at residue Q199.

This sequence belongs to the adenylate kinase family. In terms of assembly, monomer.

The protein localises to the cytoplasm. The enzyme catalyses AMP + ATP = 2 ADP. Its pathway is purine metabolism; AMP biosynthesis via salvage pathway; AMP from ADP: step 1/1. Catalyzes the reversible transfer of the terminal phosphate group between ATP and AMP. Plays an important role in cellular energy homeostasis and in adenine nucleotide metabolism. In Listeria monocytogenes serotype 4b (strain CLIP80459), this protein is Adenylate kinase.